A 795-amino-acid chain; its full sequence is MQQQPQPQPLPHSSYYTQTESELLQIEAGGTGLTFPPHRSEMAATSSQLQQASMSSNVASTATSSNLDVPSGGSTGSGSGGQTTSHFVSPLQRRHCQPPSHLPLNSVASPLRTASYKTAAAVAGHGFHHSHHQQLDFQRNSQSDDDSGCALEEYTWVPPGLRPDQVRLYFSQLPDDKVPYVNSPGEKYRVKQLLHQLPPQDNEVRYCHSLSDEERKELRIFSAQRKREALGRGAVRLLSDERPCKGCEESLSGGDIVVFAQRLGAQLCWHPGCFVCSVCKELLVDLIYFQRDGNLYCGRHHAETQKPRCSACDEIIFSDECTEAEGRTWHMKHFACQECEHQLGGQRYIMREGKPYCLGCFDTMFAEYCDYCGEVIGVDQGQMSHDGQHWHATDQCFSCCTCRCSLLGRPFLPRRGTIYCSIACSKGEPPTPSDTSSGPQLRPTHRASTSSQIARSPRRSGDRDRERESSRKANHGHGPVKGTGSAGDLLERQERKRMEAAGVADLLLGGGVPGMPRPAHPPPIDLTELGISLDNICAGDKSIFGDSQLTSSMPDMLLSKAEDSHSYQSIDKINLNSPSNSDLTQSTQELANELELDNDPVRELPHDGYEQLFANNRNTKKGHELQDMQGEEDGEQLDNRPLKEVRFHSVQDTMSRSKSYTDNSNARRRRRRRNQSRSSSEMQINQTNLRLHNAQTQAGTGTGAHNLLNNLDNCDVASICSTCSSSSSSDMDDYVYRLPARKHYGGVRVAYVPNDALAYERKKKLAQDPSLAAAASAAVPGVPGVMNESKNCTIS.

The tract at residues 30 to 96 (GTGLTFPPHR…FVSPLQRRHC (67 aa)) is disordered. The span at 52-66 (ASMSSNVASTATSSN) shows a compositional bias: low complexity. The 109-residue stretch at 135-243 (LDFQRNSQSD…AVRLLSDERP (109 aa)) folds into the PET domain. LIM zinc-binding domains lie at 242–306 (RPCK…ETQK), 307–367 (PRCS…MFAE), and 368–430 (YCDY…GEPP). Disordered stretches follow at residues 427–487 (GEPP…GSAG) and 616–684 (NRNT…EMQI). Composition is skewed to basic and acidic residues over residues 459–471 (RSGD…ESSR) and 637–649 (LDNR…RFHS). Polar residues predominate over residues 650–662 (VQDTMSRSKSYTD). Positions 666-675 (ARRRRRRRNQ) are enriched in basic residues.

Belongs to the prickle / espinas / testin family.

The protein is Protein espinas of Drosophila pseudoobscura pseudoobscura (Fruit fly).